The sequence spans 437 residues: Adenylosuccinate synthetase 1 (437 aa).

GTP contacts are provided by residues 13 to 19 (GDEGKGK) and 41 to 43 (GHT). D14 serves as the catalytic Proton acceptor. The Mg(2+) site is built by D14 and G41. IMP is bound by residues 14–17 (DEGK), 39–42 (NAGH), T130, R144, Q225, T240, and R310. The active-site Proton donor is the H42. 306-312 (ATTGRLR) serves as a coordination point for substrate. GTP-binding positions include R312, 338 to 340 (KLD), and 421 to 423 (STG).

Belongs to the adenylosuccinate synthetase family. In terms of assembly, homodimer. Mg(2+) serves as cofactor.

The protein localises to the cytoplasm. It carries out the reaction IMP + L-aspartate + GTP = N(6)-(1,2-dicarboxyethyl)-AMP + GDP + phosphate + 2 H(+). It participates in purine metabolism; AMP biosynthesis via de novo pathway; AMP from IMP: step 1/2. Functionally, plays an important role in the de novo pathway of purine nucleotide biosynthesis. Catalyzes the first committed step in the biosynthesis of AMP from IMP. This is Adenylosuccinate synthetase 1 from Pseudoalteromonas translucida (strain TAC 125).